The chain runs to 295 residues: Elongation factor Ts (295 aa).

The segment at 79–82 (TDFV) is involved in Mg(2+) ion dislocation from EF-Tu.

This sequence belongs to the EF-Ts family.

Its subcellular location is the cytoplasm. Associates with the EF-Tu.GDP complex and induces the exchange of GDP to GTP. It remains bound to the aminoacyl-tRNA.EF-Tu.GTP complex up to the GTP hydrolysis stage on the ribosome. In Bacillus cereus (strain ATCC 10987 / NRS 248), this protein is Elongation factor Ts.